Here is a 269-residue protein sequence, read N- to C-terminus: Hemin import ATP-binding protein HmuV (269 aa).

Positions 2-242 constitute an ABC transporter domain; the sequence is LEVIHTGLNI…AMVEACFDLP (241 aa). 34–41 is a binding site for ATP; it reads GPNGAGKS.

It belongs to the ABC transporter superfamily. Heme (hemin) importer (TC 3.A.1.14.5) family. In terms of assembly, the complex is composed of two ATP-binding proteins (HmuV), two transmembrane proteins (HmuU) and a solute-binding protein (HmuT).

Its subcellular location is the cell inner membrane. Its function is as follows. Part of the ABC transporter complex HmuTUV involved in hemin import. Responsible for energy coupling to the transport system. The sequence is that of Hemin import ATP-binding protein HmuV from Methylobacillus flagellatus (strain ATCC 51484 / DSM 6875 / VKM B-1610 / KT).